The primary structure comprises 238 residues: uncharacterized protein (238 aa).

It to M.thermoautotrophicum MTH564.

This is an uncharacterized protein from Methanocaldococcus jannaschii (strain ATCC 43067 / DSM 2661 / JAL-1 / JCM 10045 / NBRC 100440) (Methanococcus jannaschii).